We begin with the raw amino-acid sequence, 509 residues long: Probable aspartic-type endopeptidase CTSD (509 aa).

An N-terminal signal peptide occupies residues 1-21 (MQFLWLCLLSAVTLQFTGTLA). The Peptidase A1 domain occupies 102-408 (YFSEVKVGSE…DFDKNRVGLA (307 aa)). Asp120 is an active-site residue. Asn174 carries N-linked (GlcNAc...) asparagine glycosylation. Asp302 is a catalytic residue. An N-linked (GlcNAc...) asparagine glycan is attached at Asn361. A disordered region spans residues 451 to 489 (NKAPSGGSPGLPAESGSDSTTNGEATNGATSSPNSSSSV). Polar residues predominate over residues 466–480 (GSDSTTNGEATNGAT). Asn484 carries N-linked (GlcNAc...) asparagine glycosylation. Ser485 carries the GPI-anchor amidated serine lipid modification. Positions 486–509 (SSSVLTPTWLTLAVFFAIGSSLWS) are cleaved as a propeptide — removed in mature form.

It belongs to the peptidase A1 family.

It localises to the cell membrane. Probable GPI-anchored aspartic-type endopeptidase which contributes to virulence. The sequence is that of Probable aspartic-type endopeptidase CTSD (CTSD) from Trichophyton verrucosum (strain HKI 0517).